The following is a 613-amino-acid chain: Dihydroxy-acid dehydratase (613 aa).

Asp81 is a binding site for Mg(2+). Cys122 lines the [2Fe-2S] cluster pocket. The Mg(2+) site is built by Asp123 and Lys124. Lys124 carries the N6-carboxylysine modification. Position 193 (Cys193) interacts with [2Fe-2S] cluster. Glu489 serves as a coordination point for Mg(2+). Ser515 acts as the Proton acceptor in catalysis.

The protein belongs to the IlvD/Edd family. Homodimer. [2Fe-2S] cluster is required as a cofactor. The cofactor is Mg(2+).

It carries out the reaction (2R)-2,3-dihydroxy-3-methylbutanoate = 3-methyl-2-oxobutanoate + H2O. The catalysed reaction is (2R,3R)-2,3-dihydroxy-3-methylpentanoate = (S)-3-methyl-2-oxopentanoate + H2O. The protein operates within amino-acid biosynthesis; L-isoleucine biosynthesis; L-isoleucine from 2-oxobutanoate: step 3/4. Its pathway is amino-acid biosynthesis; L-valine biosynthesis; L-valine from pyruvate: step 3/4. In terms of biological role, functions in the biosynthesis of branched-chain amino acids. Catalyzes the dehydration of (2R,3R)-2,3-dihydroxy-3-methylpentanoate (2,3-dihydroxy-3-methylvalerate) into 2-oxo-3-methylpentanoate (2-oxo-3-methylvalerate) and of (2R)-2,3-dihydroxy-3-methylbutanoate (2,3-dihydroxyisovalerate) into 2-oxo-3-methylbutanoate (2-oxoisovalerate), the penultimate precursor to L-isoleucine and L-valine, respectively. This is Dihydroxy-acid dehydratase from Pseudomonas fluorescens (strain SBW25).